Consider the following 73-residue polypeptide: MKEHSFYQFALTVRGRKDSKGDLAEEIFNDLSFPKHEKDFNQLSDYIEMQSDISVPMSEFDDLYEEYIEWLKF.

The protein belongs to the UPF0346 family.

In Staphylococcus haemolyticus (strain JCSC1435), this protein is UPF0346 protein SH1485.